We begin with the raw amino-acid sequence, 671 residues long: Archaeal Rqc2 homolog aRqcH (671 aa).

2 coiled-coil regions span residues Lys291–Lys363 and Arg410–Lys465.

It belongs to the NEMF family. Associates with stalled 50S ribosomal subunits.

In terms of biological role, probably part of the ribosome quality control system (RQC). May mediate the addition of alanine residues (Ala tailing) to incompletely synthesized nascent chains from stalled ribosomes, leading to their degradation. In Methanocaldococcus jannaschii (strain ATCC 43067 / DSM 2661 / JAL-1 / JCM 10045 / NBRC 100440) (Methanococcus jannaschii), this protein is Archaeal Rqc2 homolog aRqcH.